The following is a 600-amino-acid chain: RNA-binding protein 47 (600 aa).

Over residues 1–25 (MTAEDSASAVAMSNPSPSSSSKSSS) the composition is skewed to low complexity. A disordered region spans residues 1–37 (MTAEDSASAVAMSNPSPSSSSKSSSGHPQHHCTVPEG). RRM domains are found at residues 82-160 (CEIF…SSVD), 162-244 (CRLF…WAEP), and 257-329 (KILY…LAKP).

Belongs to the RRM RBM47 family. Homodimer. May interact with MAVS; may regulate MAVS lysosomal degradation.

It localises to the nucleus. The protein resides in the cytoplasm. In terms of biological role, single-stranded RNA-binding protein that functions in a variety of RNA processes, including alternative splicing, RNA stabilization, and RNA editing. Independently of its RNA-binding activity, could negatively regulate MAVS by promoting its lysosomal degradation. This is RNA-binding protein 47 (rbm47) from Danio rerio (Zebrafish).